A 297-amino-acid polypeptide reads, in one-letter code: Probable lipid kinase YegS-like (297 aa).

A DAGKc domain is found at 2 to 131 (STFPASLLIL…IDIARVNDKT (130 aa)). Residues Thr40, 66–72 (GDGTINE), and Thr93 contribute to the ATP site. Positions 213, 216, and 218 each coordinate Mg(2+). Glu269 (proton acceptor) is an active-site residue.

It belongs to the diacylglycerol/lipid kinase family. YegS lipid kinase subfamily. Mg(2+) is required as a cofactor. The cofactor is Ca(2+).

It is found in the cytoplasm. Functionally, probably phosphorylates lipids; the in vivo substrate is unknown. This chain is Probable lipid kinase YegS-like, found in Klebsiella pneumoniae (strain 342).